A 118-amino-acid chain; its full sequence is Secreted effector CSEP0064 (118 aa).

A signal peptide spans 1–21 (MRPFQLLSALAIFINLEAVEA). Cys27 and Cys113 are disulfide-bonded.

As to quaternary structure, interacts in planta with the pathogenesis-related protein PR10.

It is found in the secreted. Its subcellular location is the host cell. Secreted effector that increases susceptibility to infection in both monocotyledonous and dicotyledonous plants. Non-catalytic homolog of fungal RNases that binds host RNA and inhibits the degradation of host ribosomal RNA induced by ribosome-inactivating proteins (RIPs), preventing host cell death, an inviable interaction and demise of the fungus. The chain is Secreted effector CSEP0064 from Blumeria graminis f. sp. hordei (strain DH14) (Barley powdery mildew).